The following is a 195-amino-acid chain: Probable DNA-directed RNA polymerase subunit delta (195 aa).

Residues 14 to 81 (LSMIEVAHAI…GDNTWGLRAW (68 aa)) form the HTH HARE-type domain. Positions 91 to 195 (TVGETEDEED…DEEDKEDDEE (105 aa)) are disordered. 2 stretches are compositionally biased toward acidic residues: residues 116-171 (TDDD…EDQL) and 179-195 (FGDD…DDEE).

Belongs to the RpoE family. In terms of assembly, RNAP is composed of a core of 2 alpha, a beta and a beta' subunits. The core is associated with a delta subunit and one of several sigma factors.

In terms of biological role, participates in both the initiation and recycling phases of transcription. In the presence of the delta subunit, RNAP displays an increased specificity of transcription, a decreased affinity for nucleic acids, and an increased efficiency of RNA synthesis because of enhanced recycling. This Limosilactobacillus fermentum (strain NBRC 3956 / LMG 18251) (Lactobacillus fermentum) protein is Probable DNA-directed RNA polymerase subunit delta.